Here is a 208-residue protein sequence, read N- to C-terminus: Thymidylate kinase (208 aa).

11-18 (GGEGVGKS) serves as a coordination point for ATP.

It belongs to the thymidylate kinase family.

It carries out the reaction dTMP + ATP = dTDP + ADP. Functionally, phosphorylation of dTMP to form dTDP in both de novo and salvage pathways of dTTP synthesis. The polypeptide is Thymidylate kinase (Methylococcus capsulatus (strain ATCC 33009 / NCIMB 11132 / Bath)).